The following is a 313-amino-acid chain: MSSREIRIATRKSALALWQAEYVKARLQEAHPGLVVTLVPMVSRGDKLLDSPLSKIGGKGLFVKELETALLENQADIAVHSMKDVPMDFPEGLGLFCICEREDPRDAFVSNTYASLDELPEGSVVGTSSLRRQAQLLTRRPDLQIRFLRGNVNTRLAKLDAGEYDAIILAAAGLIRLGFEDRISSSISVDDSLPAGGQGAVGIECRSADIEIHALLAPLHHADTASRVTAERALNKHLNGGCQVPIACYAVLEGEQIWLRGLVGEPSGGLLLSAEARGPRASAAELGVQVADALLAQGADDILRAVYGEAGEE.

At cysteine 242 the chain carries S-(dipyrrolylmethanemethyl)cysteine.

Belongs to the HMBS family. Monomer. Dipyrromethane serves as cofactor.

The enzyme catalyses 4 porphobilinogen + H2O = hydroxymethylbilane + 4 NH4(+). It participates in porphyrin-containing compound metabolism; protoporphyrin-IX biosynthesis; coproporphyrinogen-III from 5-aminolevulinate: step 2/4. Tetrapolymerization of the monopyrrole PBG into the hydroxymethylbilane pre-uroporphyrinogen in several discrete steps. The polypeptide is Porphobilinogen deaminase (Pseudomonas fluorescens (strain ATCC BAA-477 / NRRL B-23932 / Pf-5)).